Reading from the N-terminus, the 329-residue chain is 4-hydroxythreonine-4-phosphate dehydrogenase (329 aa).

Positions 136 and 137 each coordinate substrate. H166, H211, and H266 together coordinate a divalent metal cation. Residues K274, N283, and R292 each contribute to the substrate site.

Belongs to the PdxA family. As to quaternary structure, homodimer. Requires Zn(2+) as cofactor. The cofactor is Mg(2+). Co(2+) serves as cofactor.

The protein localises to the cytoplasm. The catalysed reaction is 4-(phosphooxy)-L-threonine + NAD(+) = 3-amino-2-oxopropyl phosphate + CO2 + NADH. The protein operates within cofactor biosynthesis; pyridoxine 5'-phosphate biosynthesis; pyridoxine 5'-phosphate from D-erythrose 4-phosphate: step 4/5. Catalyzes the NAD(P)-dependent oxidation of 4-(phosphooxy)-L-threonine (HTP) into 2-amino-3-oxo-4-(phosphooxy)butyric acid which spontaneously decarboxylates to form 3-amino-2-oxopropyl phosphate (AHAP). This chain is 4-hydroxythreonine-4-phosphate dehydrogenase, found in Escherichia coli (strain SE11).